We begin with the raw amino-acid sequence, 359 residues long: Sulfate/thiosulfate import ATP-binding protein CysA (359 aa).

Residues 3–237 (VRVAGVRKEF…PNSPFVYGFI (235 aa)) form the ABC transporter domain. 35-42 (GPSGSGKT) contributes to the ATP binding site.

It belongs to the ABC transporter superfamily. Sulfate/tungstate importer (TC 3.A.1.6) family. The complex is composed of two ATP-binding proteins (CysA), two transmembrane proteins (CysT and CysW) and a solute-binding protein (CysP).

The protein localises to the cell inner membrane. It carries out the reaction sulfate(out) + ATP + H2O = sulfate(in) + ADP + phosphate + H(+). It catalyses the reaction thiosulfate(out) + ATP + H2O = thiosulfate(in) + ADP + phosphate + H(+). In terms of biological role, part of the ABC transporter complex CysAWTP involved in sulfate/thiosulfate import. Responsible for energy coupling to the transport system. The polypeptide is Sulfate/thiosulfate import ATP-binding protein CysA (Brucella melitensis biotype 1 (strain ATCC 23456 / CCUG 17765 / NCTC 10094 / 16M)).